A 259-amino-acid chain; its full sequence is Tryptophan synthase alpha chain (259 aa).

Residues Glu52 and Asp63 each act as proton acceptor in the active site.

It belongs to the TrpA family. As to quaternary structure, tetramer of two alpha and two beta chains.

It carries out the reaction (1S,2R)-1-C-(indol-3-yl)glycerol 3-phosphate + L-serine = D-glyceraldehyde 3-phosphate + L-tryptophan + H2O. Its pathway is amino-acid biosynthesis; L-tryptophan biosynthesis; L-tryptophan from chorismate: step 5/5. In terms of biological role, the alpha subunit is responsible for the aldol cleavage of indoleglycerol phosphate to indole and glyceraldehyde 3-phosphate. This Streptococcus gordonii (strain Challis / ATCC 35105 / BCRC 15272 / CH1 / DL1 / V288) protein is Tryptophan synthase alpha chain.